The chain runs to 177 residues: Ecotin (177 aa).

The N-terminal stretch at 1-23 (MQASIQNRIFFGLVVLWSTTVLE) is a signal peptide. Residues Cys83 and Cys122 are joined by a disulfide bond.

The protein belongs to the protease inhibitor I11 (ecotin) family. As to quaternary structure, homodimer.

The protein resides in the periplasm. General inhibitor of family S1 serine proteases. This Prochlorococcus marinus (strain MIT 9313) protein is Ecotin.